The sequence spans 503 residues: Probable protein kinase UbiB (503 aa).

The chain crosses the membrane as a helical span at residues 13–35 (TFYRYRLAGLCASLMGSGWICAL). In terms of domain architecture, Protein kinase spans 120 to 491 (EFETEPIASA…QQRQSLWLAV (372 aa)). ATP contacts are provided by residues 126–134 (IASASIAQV) and K148. Catalysis depends on D283, which acts as the Proton acceptor. Residues 485 to 502 (QSLWLAVIAVVLLLILLL) form a helical membrane-spanning segment.

It belongs to the ABC1 family. UbiB subfamily.

It localises to the cell inner membrane. The protein operates within cofactor biosynthesis; ubiquinone biosynthesis [regulation]. Functionally, is probably a protein kinase regulator of UbiI activity which is involved in aerobic coenzyme Q (ubiquinone) biosynthesis. The chain is Probable protein kinase UbiB from Neisseria meningitidis serogroup B (strain ATCC BAA-335 / MC58).